A 588-amino-acid polypeptide reads, in one-letter code: MKNNLPIKSRLLYKRLLSYVKPFWPVLLLGVLANILYSGIDAGFTYMTKLFLDKSFITIDLDFVKQIPLIVLIGITLRGLVSSLGSYCMTWVARSVVKVLRQTVFSHIIHLPADYYDEATSGQLLSKILYDVEQVAQVSADALTDFIQNICLVIGLLTVMMVICWQLSLMFLLTIPFVGIIVNYTNKRVRRISHKVQKTMGEVTEIASEAIEGYRVVRIFGGERYEITKFNKATEYSRKNDMKVAISKAINVSGVQLVIAIGIAMIIMAAIHLSTVITISAGSFLAIIAAMLQLIKPMKTLTTLNATIQRGLAGAESVFNLLDLPLERNNGLILKDKIRGEIEFKHVYHAYRQGQNILHDVNFVIEAGTSVALVGHSGSGKTTIASLLPRFYELSQGMITLDGMPIQQLSLESLRKQMSLVSQNVTLFNDTLANNIAYGRFDASREQIITAAKLAYADEFIKQLPDGYDTRVGENGVLLSGGQRQRIAIARAILKDAPILILDEATSALDSESEHYIQAALEQVMNGRTTLIIAHRLSTIKHAHKIIVMQHGRIVEQGSHQELLDMDGHYAQLYKVQQFGRVNEEVVV.

6 consecutive transmembrane segments (helical) span residues 23–43 (FWPVLLLGVLANILYSGIDAG), 56–76 (FITIDLDFVKQIPLIVLIGIT), 141–161 (DALTDFIQNICLVIGLLTVMM), 162–182 (VICWQLSLMFLLTIPFVGIIV), 257–277 (LVIAIGIAMIIMAAIHLSTVI), and 278–298 (TISAGSFLAIIAAMLQLIKPM). Positions 28-310 (LLGVLANILY…LTTLNATIQR (283 aa)) constitute an ABC transmembrane type-1 domain. The ABC transporter domain maps to 342–576 (IEFKHVYHAY…DGHYAQLYKV (235 aa)). 375 to 382 (GHSGSGKT) is a binding site for ATP.

Belongs to the ABC transporter superfamily. Lipid exporter (TC 3.A.1.106) family. As to quaternary structure, homodimer.

The protein resides in the cell inner membrane. The enzyme catalyses ATP + H2O + lipid A-core oligosaccharideSide 1 = ADP + phosphate + lipid A-core oligosaccharideSide 2.. Involved in lipopolysaccharide (LPS) biosynthesis. Translocates lipid A-core from the inner to the outer leaflet of the inner membrane. Transmembrane domains (TMD) form a pore in the inner membrane and the ATP-binding domain (NBD) is responsible for energy generation. In Legionella pneumophila (strain Lens), this protein is ATP-dependent lipid A-core flippase.